The following is a 343-amino-acid chain: Selenide, water dikinase (343 aa).

Sec-16 is an active-site residue. A non-standard amino acid (selenocysteine) is located at residue Sec-16. ATP-binding positions include Lys-19 and 46–48; that span reads GAE. Asp-49 lines the Mg(2+) pocket. Residues Asp-66, Asp-89, and 137–139 each bind ATP; that span reads GHT. Asp-89 lines the Mg(2+) pocket. A Mg(2+)-binding site is contributed by Asp-225.

The protein belongs to the selenophosphate synthase 1 family. Class I subfamily. Homodimer. Mg(2+) is required as a cofactor.

The catalysed reaction is hydrogenselenide + ATP + H2O = selenophosphate + AMP + phosphate + 2 H(+). Its function is as follows. Synthesizes selenophosphate from selenide and ATP. In Citrifermentans bemidjiense (strain ATCC BAA-1014 / DSM 16622 / JCM 12645 / Bem) (Geobacter bemidjiensis), this protein is Selenide, water dikinase.